The sequence spans 494 residues: Glycerol kinase (494 aa).

Thr-13 contributes to the ADP binding site. Residues Thr-13, Thr-14, and Ser-15 each coordinate ATP. Residue Thr-13 participates in sn-glycerol 3-phosphate binding. Arg-17 serves as a coordination point for ADP. 4 residues coordinate sn-glycerol 3-phosphate: Arg-83, Glu-84, Tyr-135, and Asp-244. Glycerol contacts are provided by Arg-83, Glu-84, Tyr-135, Asp-244, and Gln-245. 2 residues coordinate ADP: Thr-266 and Gly-309. ATP is bound by residues Thr-266, Gly-309, Gln-313, and Gly-410. The ADP site is built by Gly-410 and Asn-414.

Belongs to the FGGY kinase family.

It carries out the reaction glycerol + ATP = sn-glycerol 3-phosphate + ADP + H(+). It participates in polyol metabolism; glycerol degradation via glycerol kinase pathway; sn-glycerol 3-phosphate from glycerol: step 1/1. Inhibited by fructose 1,6-bisphosphate (FBP). Its function is as follows. Key enzyme in the regulation of glycerol uptake and metabolism. Catalyzes the phosphorylation of glycerol to yield sn-glycerol 3-phosphate. The polypeptide is Glycerol kinase (Shewanella sp. (strain MR-4)).